A 238-amino-acid chain; its full sequence is 5'-deoxynucleotidase YBR242W (238 aa).

An HD domain is found at 77–183 (ISDHMYRLSI…VKDIDKYEML (107 aa)). Residues histidine 80, histidine 108, aspartate 109, glutamate 112, aspartate 117, isoleucine 118, and aspartate 178 each contribute to the a divalent metal cation site.

Belongs to the HDDC2 family. In terms of assembly, homodimer. Mn(2+) serves as cofactor. Co(2+) is required as a cofactor. Requires Mg(2+) as cofactor.

The catalysed reaction is a 2'-deoxyribonucleoside 5'-phosphate + H2O = a 2'-deoxyribonucleoside + phosphate. Catalyzes the dephosphorylation of the nucleoside 5'-monophosphates deoxyadenosine monophosphate (dAMP), deoxycytidine monophosphate (dCMP), deoxyguanosine monophosphate (dGMP) and deoxythymidine monophosphate (dTMP). The chain is 5'-deoxynucleotidase YBR242W from Saccharomyces cerevisiae (strain ATCC 204508 / S288c) (Baker's yeast).